Here is a 151-residue protein sequence, read N- to C-terminus: Large ribosomal subunit protein uL22c (151 aa).

This sequence belongs to the universal ribosomal protein uL22 family. In terms of assembly, part of the 50S ribosomal subunit.

The protein localises to the plastid. It localises to the chloroplast. Functionally, this protein binds specifically to 23S rRNA. The globular domain of the protein is located near the polypeptide exit tunnel on the outside of the subunit, while an extended beta-hairpin is found that lines the wall of the exit tunnel in the center of the 70S ribosome. The sequence is that of Large ribosomal subunit protein uL22c (rpl22) from Gossypium barbadense (Sea Island cotton).